The following is a 170-amino-acid chain: Ribosomal RNA small subunit methyltransferase G (170 aa).

Residues Gly-70, Leu-75, 120–121, and Arg-138 contribute to the S-adenosyl-L-methionine site; that span reads AE.

Belongs to the methyltransferase superfamily. RNA methyltransferase RsmG family.

It localises to the cytoplasm. Specifically methylates the N7 position of guanine in position 518 of 16S rRNA. This is Ribosomal RNA small subunit methyltransferase G from Mycobacterium ulcerans (strain Agy99).